Consider the following 666-residue polypeptide: Probable potassium transport system protein Kup (666 aa).

Helical transmembrane passes span 16–36 (GFII…LYTM), 58–78 (ISLI…LVAL), 99–119 (TPWL…DGAL), 141–161 (IFQN…LLFA), 167–187 (TGVI…FLGI), 221–241 (IFIL…YSDL), 253–273 (WPFV…WILA), 292–312 (FTMH…QALI), 343–363 (TYIP…VLLF), 373–393 (YGLA…FFLI), 402–422 (VLLM…ASAV), and 424–444 (FMHG…IMTI).

The protein belongs to the HAK/KUP transporter (TC 2.A.72) family.

The protein localises to the cell membrane. It catalyses the reaction K(+)(in) + H(+)(in) = K(+)(out) + H(+)(out). Functionally, transport of potassium into the cell. Likely operates as a K(+):H(+) symporter. The polypeptide is Probable potassium transport system protein Kup (Streptococcus agalactiae serotype V (strain ATCC BAA-611 / 2603 V/R)).